Reading from the N-terminus, the 260-residue chain is Phosphatidylglycerol--prolipoprotein diacylglyceryl transferase (260 aa).

Helical transmembrane passes span 17–37 (VVKW…SWIF), 52–72 (LTAA…LHVI), 85–105 (IFSG…IGLW), and 113–133 (FNLG…QAIG). Arg-134 serves as a coordination point for a 1,2-diacyl-sn-glycero-3-phospho-(1'-sn-glycerol). 3 consecutive transmembrane segments (helical) span residues 170 to 190 (APTQ…SLFI), 198 to 218 (GQLF…IGFV), and 227 to 247 (GLEQ…PLFI).

It belongs to the Lgt family.

The protein localises to the cell membrane. It carries out the reaction L-cysteinyl-[prolipoprotein] + a 1,2-diacyl-sn-glycero-3-phospho-(1'-sn-glycerol) = an S-1,2-diacyl-sn-glyceryl-L-cysteinyl-[prolipoprotein] + sn-glycerol 1-phosphate + H(+). It participates in protein modification; lipoprotein biosynthesis (diacylglyceryl transfer). Functionally, catalyzes the transfer of the diacylglyceryl group from phosphatidylglycerol to the sulfhydryl group of the N-terminal cysteine of a prolipoprotein, the first step in the formation of mature lipoproteins. In Dehalococcoides mccartyi (strain ATCC BAA-2100 / JCM 16839 / KCTC 5957 / BAV1), this protein is Phosphatidylglycerol--prolipoprotein diacylglyceryl transferase.